Reading from the N-terminus, the 119-residue chain is Large ribosomal subunit protein uL18 (119 aa).

The protein belongs to the universal ribosomal protein uL18 family. Part of the 50S ribosomal subunit; part of the 5S rRNA/L5/L18/L25 subcomplex. Contacts the 5S and 23S rRNAs.

In terms of biological role, this is one of the proteins that bind and probably mediate the attachment of the 5S RNA into the large ribosomal subunit, where it forms part of the central protuberance. This Sorangium cellulosum (strain So ce56) (Polyangium cellulosum (strain So ce56)) protein is Large ribosomal subunit protein uL18.